Here is a 370-residue protein sequence, read N- to C-terminus: MADKRDFYEILGVSKSATDAEIKKAYRQLAKKYHPDINKEDGAEAKFKEVQEAYEVLSDSQKRANYDQFGHAAFDQGAGGFGGGFSGGFDDFGDIFSSFFGGGGGGQRRNPNGPMKGQDRFMSMRIDFMEAVFGANKSVTLNVDEECTSCHGSGAHSKDDIKTCSRCGGTGQTVTQQRTPFGVFQSQATCPDCGGSGKTITKRCGECHGKGFNTKRVEVDIKIPAGIVTGQQLRVSGKGERGANGGPNGDLFIEIVVGTHKHFRREGNDIHINIPLSVIDATLGTEIEVPTVHGDVKLTIPAGTQPNTKFRLREKGVQDLRSGRMGDQYVEVKLEVPTKLSRQQREHLEALKETEVKGDSVFDRFKKAFK.

Residues 6–70 (DFYEILGVSK…QKRANYDQFG (65 aa)) enclose the J domain. A CR-type zinc finger spans residues 134–216 (GANKSVTLNV…CHGKGFNTKR (83 aa)). The Zn(2+) site is built by Cys147, Cys150, Cys164, Cys167, Cys190, Cys193, Cys204, and Cys207. CXXCXGXG motif repeat units follow at residues 147 to 154 (CTSCHGSG), 164 to 171 (CSRCGGTG), 190 to 197 (CPDCGGSG), and 204 to 211 (CGECHGKG).

The protein belongs to the DnaJ family. Homodimer. Zn(2+) is required as a cofactor.

It is found in the cytoplasm. Its function is as follows. Participates actively in the response to hyperosmotic and heat shock by preventing the aggregation of stress-denatured proteins and by disaggregating proteins, also in an autonomous, DnaK-independent fashion. Unfolded proteins bind initially to DnaJ; upon interaction with the DnaJ-bound protein, DnaK hydrolyzes its bound ATP, resulting in the formation of a stable complex. GrpE releases ADP from DnaK; ATP binding to DnaK triggers the release of the substrate protein, thus completing the reaction cycle. Several rounds of ATP-dependent interactions between DnaJ, DnaK and GrpE are required for fully efficient folding. Also involved, together with DnaK and GrpE, in the DNA replication of plasmids through activation of initiation proteins. In Erysipelothrix rhusiopathiae, this protein is Chaperone protein DnaJ.